A 223-amino-acid polypeptide reads, in one-letter code: RNA pyrophosphohydrolase (223 aa).

The Nudix hydrolase domain occupies 6-149; it reads GFRPNVGIIL…KRGVYEMALT (144 aa). The short motif at 38 to 59 is the Nudix box element; that stretch reads GGIDRGESPEQAMFRELHEEVG. Residues 175–223 are disordered; that stretch reads ERHMPDGGAPAGLDLPPGGSFDPHPDITSASDDPSPPPHNKAPFLPSQR. Residues 180 to 193 show a composition bias toward low complexity; it reads DGGAPAGLDLPPGG.

This sequence belongs to the Nudix hydrolase family. RppH subfamily. A divalent metal cation serves as cofactor.

Functionally, accelerates the degradation of transcripts by removing pyrophosphate from the 5'-end of triphosphorylated RNA, leading to a more labile monophosphorylated state that can stimulate subsequent ribonuclease cleavage. This chain is RNA pyrophosphohydrolase, found in Variovorax paradoxus (strain S110).